The following is a 422-amino-acid chain: 3-phosphoshikimate 1-carboxyvinyltransferase (422 aa).

3-phosphoshikimate-binding residues include Lys-21, Ser-22, and Arg-26. A phosphoenolpyruvate-binding site is contributed by Lys-21. Residues Gly-93 and Arg-121 each contribute to the phosphoenolpyruvate site. 6 residues coordinate 3-phosphoshikimate: Ser-166, Ser-167, Gln-168, Ser-194, Asp-310, and Lys-337. Gln-168 is a binding site for phosphoenolpyruvate. Asp-310 functions as the Proton acceptor in the catalytic mechanism. Arg-341, Arg-382, and Lys-407 together coordinate phosphoenolpyruvate.

Belongs to the EPSP synthase family. In terms of assembly, monomer.

The protein localises to the cytoplasm. It catalyses the reaction 3-phosphoshikimate + phosphoenolpyruvate = 5-O-(1-carboxyvinyl)-3-phosphoshikimate + phosphate. Its pathway is metabolic intermediate biosynthesis; chorismate biosynthesis. Its function is as follows. Catalyzes the transfer of the enolpyruvyl moiety of phosphoenolpyruvate (PEP) to the 5-hydroxyl of shikimate-3-phosphate (S3P) to produce enolpyruvyl shikimate-3-phosphate and inorganic phosphate. This Methanoculleus marisnigri (strain ATCC 35101 / DSM 1498 / JR1) protein is 3-phosphoshikimate 1-carboxyvinyltransferase.